We begin with the raw amino-acid sequence, 335 residues long: 2-acylglycerol O-acyltransferase 2-A (335 aa).

2 helical membrane-spanning segments follow: residues 24–44 (WVFS…VLLF) and 47–67 (FWII…TPSK).

This sequence belongs to the diacylglycerol acyltransferase family.

The protein localises to the endoplasmic reticulum membrane. The protein resides in the cytoplasm. Its subcellular location is the perinuclear region. It carries out the reaction a 2-acylglycerol + an acyl-CoA = a 1,2-diacylglycerol + CoA. The enzyme catalyses a 2-acylglycerol + an acyl-CoA = a 1,2-diacyl-sn-glycerol + CoA. It catalyses the reaction a 2-acylglycerol + an acyl-CoA = a 2,3-diacyl-sn-glycerol + CoA. The catalysed reaction is a 1-acylglycerol + an acyl-CoA = a 1,2-diacylglycerol + CoA. It carries out the reaction a 1-acylglycerol + an acyl-CoA = a 1,3-diacylglycerol + CoA. The enzyme catalyses 1-O-alkylglycerol + an acyl-CoA = 1-O-alkyl-3-acylglycerol + CoA. It catalyses the reaction an acyl-CoA + a 1,2-diacyl-sn-glycerol = a triacyl-sn-glycerol + CoA. The protein operates within glycerolipid metabolism; triacylglycerol biosynthesis. Functionally, catalyzes the formation of diacylglycerol from 2-monoacylglycerol and fatty acyl-CoA. In terms of biological role, involved in glycerolipid synthesis and lipid metabolism. Catalyzes the formation of diacylglycerol, the precursor of triacylglycerol, by transferring the acyl chain of a fatty acyl-CoA to a monoacylglycerol. Plays a central role in absorption of dietary fat in the small intestine by catalyzing the resynthesis of triacylglycerol in enterocytes. Has a preference toward monoacylglycerols containing unsaturated fatty acids in an order of C18:3 &gt; C18:2 &gt; C18:1 &gt; C18:0 at sn-2. Able to use 1-monoalkylglycerol (1-MAkG, 1-O-alkylglycerol) as an acyl acceptor for the synthesis of monoalkyl-monoacylglycerol (MAMAG, 1-O-alkyl-3-acylglycerol or 1-O-alkyl-2-acylglycerol) and subsequently, with lower efficiency, may add another acyl chain producing monoalkyl-diacylglycerol (MADAG, 1-O-alkyl-2,3-diacylglycerol). Possesses weak but significant activity with diacylglycerol as substrate, producing triacylglycerol (triacyl-sn-glycerol). In Xenopus laevis (African clawed frog), this protein is 2-acylglycerol O-acyltransferase 2-A (mogat2-a).